The chain runs to 489 residues: Rhamnulokinase (489 aa).

Residue 13–17 (ASSGR) participates in ATP binding. Cys-68 and Cys-222 are oxidised to a cystine. Substrate is bound by residues Gly-83 and 236–238 (HDT). Asp-237 serves as the catalytic Proton acceptor. Position 259 (Thr-259) interacts with ATP. Substrate is bound at residue Asn-296. An ATP-binding site is contributed by Gln-304. A disulfide bridge links Cys-353 with Cys-370. Gly-402 provides a ligand contact to ATP. Cys-413 and Cys-417 are oxidised to a cystine.

The protein belongs to the rhamnulokinase family. In terms of assembly, monomer. Mg(2+) is required as a cofactor.

The enzyme catalyses L-rhamnulose + ATP = L-rhamnulose 1-phosphate + ADP + H(+). Its pathway is carbohydrate degradation; L-rhamnose degradation; glycerone phosphate from L-rhamnose: step 2/3. Its function is as follows. Involved in the catabolism of L-rhamnose (6-deoxy-L-mannose). Catalyzes the transfer of the gamma-phosphate group from ATP to the 1-hydroxyl group of L-rhamnulose to yield L-rhamnulose 1-phosphate. The protein is Rhamnulokinase of Escherichia coli (strain K12 / DH10B).